We begin with the raw amino-acid sequence, 106 residues long: MNNERIYQVLKGLVFSEKAQVLGDTAGVQVFKVDINATKLEIKKAVEKLFGVEVVKVNTTITKGKTKRFGRTLGRRSDVKKAYVTLKAGQDVEMADLGDTAESAAE.

Belongs to the universal ribosomal protein uL23 family. Part of the 50S ribosomal subunit. Contacts protein L29, and trigger factor when it is bound to the ribosome.

Functionally, one of the early assembly proteins it binds 23S rRNA. One of the proteins that surrounds the polypeptide exit tunnel on the outside of the ribosome. Forms the main docking site for trigger factor binding to the ribosome. This Acinetobacter baumannii (strain SDF) protein is Large ribosomal subunit protein uL23.